Here is a 361-residue protein sequence, read N- to C-terminus: tRNA-specific 2-thiouridylase MnmA (361 aa).

ATP contacts are provided by residues 11–18 (GMSGGVDS) and methionine 37. The Nucleophile role is filled by cysteine 106. Cysteine 106 and cysteine 202 are joined by a disulfide. Glycine 130 lines the ATP pocket. Positions 152–154 (KDQ) are interaction with tRNA. Cysteine 202 acts as the Cysteine persulfide intermediate in catalysis. The interaction with tRNA stretch occupies residues 308 to 309 (RY).

Belongs to the MnmA/TRMU family.

The protein localises to the cytoplasm. The enzyme catalyses S-sulfanyl-L-cysteinyl-[protein] + uridine(34) in tRNA + AH2 + ATP = 2-thiouridine(34) in tRNA + L-cysteinyl-[protein] + A + AMP + diphosphate + H(+). In terms of biological role, catalyzes the 2-thiolation of uridine at the wobble position (U34) of tRNA, leading to the formation of s(2)U34. The chain is tRNA-specific 2-thiouridylase MnmA from Clostridium botulinum (strain Alaska E43 / Type E3).